We begin with the raw amino-acid sequence, 435 residues long: MKRRASDRGAGETSTKAKALCTGISGNNAKRAGPFILGPRLGNSPVPSIVQCLARKDGTDDFYQLKILTLEERGDKGIETQEERQGKMLLHTEYSLLSLLHNQEGVVHHHGLFQDRACEIIEDLEANRMVRKMKKRICLVLDCLCAHDFSDKTADLINLQHYVIKEKRLSERETVVIFYDVVRVVEALHKKNIVHRDLKLGNMVLNKRTHRITITNFCLGKHLVSEDDLLKDQRGSPAYISPDVLSGRPYRGKPSDMWALGVVLFTMLYGQFPFYDSIPQELFRKIKAAEYTIPEDGRVSENTVCLIRKLLVLDPQQRLTASEELDSLSSIIASWQSMSLLSGPLQVVPDIDDQVANPEHPQEAKVTEECSQYEFENYMRQQLLLAEEKNTLHEAKSFLQKRQFGNIPPVRRLGHDAQPMNPLDAAILAQRYLRK.

The Protein kinase domain occupies 35 to 332; that stretch reads FILGPRLGNS…EELDSLSSII (298 aa). ATP-binding positions include 41–49 and lysine 66; that span reads LGNSPVPSI. The Proton acceptor role is filled by aspartate 197.

The protein belongs to the protein kinase superfamily. CAMK Ser/Thr protein kinase family.

The protein localises to the nucleus. It localises to the cytoplasm. It catalyses the reaction L-seryl-[protein] + ATP = O-phospho-L-seryl-[protein] + ADP + H(+). It carries out the reaction L-threonyl-[protein] + ATP = O-phospho-L-threonyl-[protein] + ADP + H(+). Functionally, may be a negative regulator of NF-kappa-B and p53-mediated gene transcription. This Gallus gallus (Chicken) protein is Serine/threonine-protein kinase 40 (STK40).